We begin with the raw amino-acid sequence, 372 residues long: 4-hydroxy-3-methylbut-2-en-1-yl diphosphate synthase (flavodoxin) (372 aa).

4 residues coordinate [4Fe-4S] cluster: cysteine 270, cysteine 273, cysteine 305, and glutamate 312.

The protein belongs to the IspG family. [4Fe-4S] cluster serves as cofactor.

It catalyses the reaction (2E)-4-hydroxy-3-methylbut-2-enyl diphosphate + oxidized [flavodoxin] + H2O + 2 H(+) = 2-C-methyl-D-erythritol 2,4-cyclic diphosphate + reduced [flavodoxin]. It functions in the pathway isoprenoid biosynthesis; isopentenyl diphosphate biosynthesis via DXP pathway; isopentenyl diphosphate from 1-deoxy-D-xylulose 5-phosphate: step 5/6. In terms of biological role, converts 2C-methyl-D-erythritol 2,4-cyclodiphosphate (ME-2,4cPP) into 1-hydroxy-2-methyl-2-(E)-butenyl 4-diphosphate. The sequence is that of 4-hydroxy-3-methylbut-2-en-1-yl diphosphate synthase (flavodoxin) from Marinobacter nauticus (strain ATCC 700491 / DSM 11845 / VT8) (Marinobacter aquaeolei).